The primary structure comprises 288 residues: Thymidylate synthase (288 aa).

DUMP contacts are provided by residues Arg-21 and 150-151; that span reads RR. Catalysis depends on Cys-170, which acts as the Nucleophile. DUMP contacts are provided by residues 190-193, Asn-201, and 231-233; these read RSGD and HIY. Residue Asp-193 participates in (6R)-5,10-methylene-5,6,7,8-tetrahydrofolate binding. Ala-287 contacts (6R)-5,10-methylene-5,6,7,8-tetrahydrofolate.

Belongs to the thymidylate synthase family. Bacterial-type ThyA subfamily. As to quaternary structure, homodimer.

Its subcellular location is the cytoplasm. The enzyme catalyses dUMP + (6R)-5,10-methylene-5,6,7,8-tetrahydrofolate = 7,8-dihydrofolate + dTMP. The protein operates within pyrimidine metabolism; dTTP biosynthesis. In terms of biological role, catalyzes the reductive methylation of 2'-deoxyuridine-5'-monophosphate (dUMP) to 2'-deoxythymidine-5'-monophosphate (dTMP) while utilizing 5,10-methylenetetrahydrofolate (mTHF) as the methyl donor and reductant in the reaction, yielding dihydrofolate (DHF) as a by-product. This enzymatic reaction provides an intracellular de novo source of dTMP, an essential precursor for DNA biosynthesis. In Acholeplasma laidlawii (strain PG-8A), this protein is Thymidylate synthase.